The chain runs to 418 residues: Serine hydroxymethyltransferase (418 aa).

(6S)-5,6,7,8-tetrahydrofolate contacts are provided by residues Leu121 and 125-127 (GHL). The residue at position 230 (Lys230) is an N6-(pyridoxal phosphate)lysine. 356–358 (SPF) serves as a coordination point for (6S)-5,6,7,8-tetrahydrofolate.

This sequence belongs to the SHMT family. In terms of assembly, homodimer. It depends on pyridoxal 5'-phosphate as a cofactor.

The protein resides in the cytoplasm. It catalyses the reaction (6R)-5,10-methylene-5,6,7,8-tetrahydrofolate + glycine + H2O = (6S)-5,6,7,8-tetrahydrofolate + L-serine. It participates in one-carbon metabolism; tetrahydrofolate interconversion. It functions in the pathway amino-acid biosynthesis; glycine biosynthesis; glycine from L-serine: step 1/1. In terms of biological role, catalyzes the reversible interconversion of serine and glycine with tetrahydrofolate (THF) serving as the one-carbon carrier. This reaction serves as the major source of one-carbon groups required for the biosynthesis of purines, thymidylate, methionine, and other important biomolecules. Also exhibits THF-independent aldolase activity toward beta-hydroxyamino acids, producing glycine and aldehydes, via a retro-aldol mechanism. This chain is Serine hydroxymethyltransferase, found in Shewanella piezotolerans (strain WP3 / JCM 13877).